A 250-amino-acid polypeptide reads, in one-letter code: Aminoglycoside 3'-phosphotransferase (250 aa).

D178 acts as the Proton acceptor in catalysis.

The protein belongs to the aminoglycoside phosphotransferase family.

The catalysed reaction is kanamycin A + ATP = kanamycin 3'-phosphate + ADP + H(+). In terms of biological role, resistance to kanamycin and structurally-related aminoglycosides, including amikacin. The protein is Aminoglycoside 3'-phosphotransferase (aphA-7) of Campylobacter jejuni.